We begin with the raw amino-acid sequence, 164 residues long: MFMNSMLRVSRQRAAVRSTVSLYRGFVSASIRRNEQNVVKAAAQELANAKEPSDLIGPGGRDGEVPTDLEQATGLERYELLSELSGRDAFDMKPLDASRKGTLTDPIMVTSLDPYRHIGCTGSPSGSHNLIWMTVYKDKLRRCPECGSVYKLKFMGDPNAEHSH.

The N-terminal 33 residues, 1–33 (MFMNSMLRVSRQRAAVRSTVSLYRGFVSASIRR), are a transit peptide targeting the mitochondrion. Zn(2+)-binding residues include Cys120, His128, Cys143, and Cys146.

Belongs to the cytochrome c oxidase subunit 5B family. Component of the cytochrome c oxidase (complex IV, CIV), a multisubunit enzyme composed of a catalytic core of 3 subunits and several supernumerary subunits. The complex exists as a monomer or a dimer and forms supercomplexes (SCs) in the inner mitochondrial membrane with ubiquinol-cytochrome c oxidoreductase (cytochrome b-c1 complex, complex III, CIII).

The protein resides in the mitochondrion inner membrane. It functions in the pathway energy metabolism; oxidative phosphorylation. Component of the cytochrome c oxidase, the last enzyme in the mitochondrial electron transport chain which drives oxidative phosphorylation. The respiratory chain contains 3 multisubunit complexes succinate dehydrogenase (complex II, CII), ubiquinol-cytochrome c oxidoreductase (cytochrome b-c1 complex, complex III, CIII) and cytochrome c oxidase (complex IV, CIV), that cooperate to transfer electrons derived from NADH and succinate to molecular oxygen, creating an electrochemical gradient over the inner membrane that drives transmembrane transport and the ATP synthase. Cytochrome c oxidase is the component of the respiratory chain that catalyzes the reduction of oxygen to water. Electrons originating from reduced cytochrome c in the intermembrane space (IMS) are transferred via the dinuclear copper A center (CU(A)) of subunit 2 and heme A of subunit 1 to the active site in subunit 1, a binuclear center (BNC) formed by heme A3 and copper B (CU(B)). The BNC reduces molecular oxygen to 2 water molecules using 4 electrons from cytochrome c in the IMS and 4 protons from the mitochondrial matrix. This Schizosaccharomyces pombe (strain 972 / ATCC 24843) (Fission yeast) protein is Cytochrome c oxidase subunit 4, mitochondrial (cox4).